The following is a 343-amino-acid chain: Galactoside alpha-(1,2)-fucosyltransferase 2 (343 aa).

The Cytoplasmic segment spans residues 1-14 (MLVVQMPFSFPVAH). A helical; Signal-anchor for type II membrane protein transmembrane segment spans residues 15–28 (FILFVFTVSTIFHI). The Lumenal portion of the chain corresponds to 29 to 343 (QQRLAKIQAM…AADLSPLLKH (315 aa)). N188, N282, and N308 each carry an N-linked (GlcNAc...) asparagine glycan.

The protein belongs to the glycosyltransferase 11 family.

The protein resides in the golgi apparatus. Its subcellular location is the golgi stack membrane. The enzyme catalyses a beta-D-galactosyl-(1-&gt;3)-N-acetyl-beta-D-glucosaminyl derivative + GDP-beta-L-fucose = an alpha-L-Fuc-(1-&gt;2)-beta-D-Gal-(1-&gt;3)-beta-D-GlcNAc derivative + GDP + H(+). It carries out the reaction a beta-D-galactosyl-(1-&gt;4)-N-acetyl-beta-D-glucosaminyl derivative + GDP-beta-L-fucose = an alpha-L-Fuc-(1-&gt;2)-beta-D-Gal-(1-&gt;4)-beta-D-GlcNAc derivative + GDP + H(+). The catalysed reaction is a neolactoside nLc4Cer + GDP-beta-L-fucose = a neolactoside IV(2)-alpha-Fuc-nLc4Cer + GDP + H(+). It catalyses the reaction a neolactoside nLc4Cer(d18:1(4E)) + GDP-beta-L-fucose = a neolactoside IV(2)-alpha-Fuc-nLc4Cer(d18:1(4E)) + GDP + H(+). The enzyme catalyses a ganglioside GM1 + GDP-beta-L-fucose = a ganglioside Fuc-GM1 + GDP + H(+). It carries out the reaction a ganglioside GA1 + GDP-beta-L-fucose = a ganglioside Fuc-GA1 + GDP + H(+). The catalysed reaction is Lc4Cer + GDP-beta-L-fucose = alpha-L-fucosyl-(1-&gt;2)-beta-D-galactosyl-(1-&gt;3)-N-acetyl-beta-D-glucosaminyl-(1-&gt;3)-beta-D-galactosyl-(1-&gt;4)-beta-D-glucosyl-(1&lt;-&gt;1')-ceramide + GDP + H(+). It catalyses the reaction a beta-D-Gal-(1-&gt;3)-beta-D-GlcNAc-(1-&gt;3)-beta-D-Gal-(1-&gt;4)-beta-D-Glc-(1&lt;-&gt;1')-Cer(d18:1(4E)) + GDP-beta-L-fucose = alpha-L-fucosyl-(1-&gt;2)- beta-D-galactosyl-(1-&gt;3)-N-acetyl-beta-D-glucosaminyl-(1-&gt;3)-beta-D-galactosyl-(1-&gt;4)-beta-D-glucosyl-(1&lt;-&gt;1')-N-acylsphing-4-enine + GDP + H(+). The enzyme catalyses a ganglioside GD1b + GDP-beta-L-fucose = a ganglioside Fuc-GD1b + GDP + H(+). It carries out the reaction a ganglioside GM1 (d18:1(4E)) + GDP-beta-L-fucose = a ganglioside Fuc-GM1 (d18:1(4E)) + GDP + H(+). The catalysed reaction is a globoside GalGb4Cer (d18:1(4E)) + GDP-beta-L-fucose = a globoside Globo-H (d18:1(4E)) + GDP + H(+). It catalyses the reaction a lactoside III(4)-a-Fuc-Lc4Cer + GDP-beta-L-fucose = a lactoside IV(2),III(4)-a-[Fuc]2-Lc4Cer + GDP + H(+). The enzyme catalyses beta-D-galactosyl-(1-&gt;3)-N-acetyl-D-galactosamine + GDP-beta-L-fucose = alpha-L-fucosyl-(1-&gt;2)-beta-D-galactosyl-(1-&gt;3)-N-acetyl-D-galactosamine + GDP + H(+). It functions in the pathway protein modification; protein glycosylation. In terms of biological role, catalyzes the transfer of L-fucose, from a guanosine diphosphate-beta-L-fucose, to the terminal galactose on both O- and N-linked glycans chains of cell surface glycoproteins and glycolipids and the resulting epitope regulates several processes such as cell-cell interaction including host-microbe interaction, cell surface expression and cell proliferation. Preferentially fucosylates gangliosides GA1 and GM1 in the antrum, cecum and colon and in the female reproductive organs. Fucosylated host glycoproteins or glycolipids mediate interaction with intestinal microbiota influencing its composition. Creates a soluble precursor oligosaccharide FuC-alpha ((1,2)Galbeta-) called the H antigen which is an essential substrate for the final step in the soluble ABO blood group antigen synthesis pathway. The protein is Galactoside alpha-(1,2)-fucosyltransferase 2 of Pongo pygmaeus (Bornean orangutan).